Reading from the N-terminus, the 1350-residue chain is MDTVHEGHHGSDSSSSGDTVNVEVTNYEKTQLGQAPLPLAPAPTPAVPVNEKKHKSQKEKKHKGQNEKQDKDSDDEGEDPFAHLPDHEKAVLKRQLDIPTVKVTYFMLFRYATLNDKLLMVLSALSSIIGGALLPLMTIVFGGLTTTFKDFFRQTITQEHFNHELSRFSLYFLYLAIGEFVFVYIATAGFLYTGEHVAGKIRENFLKAILRQNIAFFDQLGAGEITTRITSDTNLVQDGISEKVGLTLTALATFITAFVVSFIKDWKLTLILMSTVFAIVFTMGGMSGFIVKFNKASLASYAEGGTVAEEVISSVRNAKAFNTEAKLTRAYDAHLAVAEKWGFKMKAVTGSMIGFLMCYVYLNYSLAFWMGSRYLVSGRIEVGDVLTIILSIMIGAFALGNVAPNIQAFTTSVAAAAKIFATIDRVSPLDPSSESGETLKSVEGHIELRNIRHIYPSRPEVTVMEDVSLIVPAGKTTALVGESGSGKSTIVGLVERFYDPVGGTVYLDGQDISSLNLRWLRRQISLVSQEPTLFATTIFGNIRHGLIGTAYESESEEKIRELVENAARFANAHDFITGLPEGYATNVGERGFLLSGGQKQRIAIARAMVSDPKILLLDEATSALDTKSEGVVQAALDKAALGRTTIVIAHRLSTIKGADNIVVMSRGRIVEQGTHDALLEKQGAYYNLVEAQRIAAENENKDQEEVAILDEKDQNLKHETTKGEQPEDGLKLARTQTGKSQSSIVLADKKAEVENRYSLWTLIKVVAVFNRQEWLYMTIGIICSVITGGGNPTQAVFFAKAVTALSGDNSTPQGKATIRSQANFWSWMYFMLALVQFSAFLIQGYVFAVCSERLVHRAREQAFKTMLRQDIAFFDKEENTAGALTSFLSTETTHLAGMSGVTLGTILSVIVTLVAAFSVSLAIQWKLSLVCISTVPILLACGFLRFWMLARFQATAKKAYEKSASYACEATSAIRTVASLTREDDVHLHYHDQLVDQERKSLISILRSSSLYAASQSLIFCCTALGFWYGGTLIAKKEIGQFQFFLCFSAVIFGAQSAGTIFSFAPDMGKAKQAAAELKALFDRKPEIDSWSEDGEQLSSVEGHIEFRDVHFRYPTRPEQPVLRGLNLTVKPGQYVALVGASGCGKSTTIQLLERFYDPLAGGVYIDGKEVSSLNVNNYRSWIALVSQEPTLYQGTVKENILLGADRENVPQEAIEQACRDANIYDFIMSLPDAFDTIVGSKGSMLSGGQKQRIAIARALLRDPKILLLDEATSALDSESEKVVQAALDKAAKGRTTIAVAHRLSTIQRADMIYVFDAGKVVESGTHTELIHLRGRYWELVNLQSLGKAQ.

The span at 1 to 11 (MDTVHEGHHGS) shows a compositional bias: basic and acidic residues. The segment at 1 to 84 (MDTVHEGHHG…DEGEDPFAHL (84 aa)) is disordered. Residues 22 to 33 (VEVTNYEKTQLG) are compositionally biased toward polar residues. Residues 52–63 (KKHKSQKEKKHK) are compositionally biased toward basic residues. The region spanning 121–411 (VLSALSSIIG…VAPNIQAFTT (291 aa)) is the ABC transmembrane type-1 1 domain. 6 consecutive transmembrane segments (helical) span residues 124-144 (ALSS…FGGL), 170-190 (LYFL…TAGF), 243-263 (KVGL…VSFI), 271-291 (ILMS…GFIV), 350-370 (GSMI…AFWM), and 380-400 (IEVG…FALG). The ABC transporter 1 domain occupies 446–691 (IELRNIRHIY…QGAYYNLVEA (246 aa)). 481 to 488 (GESGSGKS) contributes to the ATP binding site. Residues 712–731 (KDQNLKHETTKGEQPEDGLK) show a composition bias toward basic and acidic residues. The tract at residues 712 to 734 (KDQNLKHETTKGEQPEDGLKLAR) is disordered. The next 6 helical transmembrane spans lie at 779 to 799 (IGII…VFFA), 830 to 850 (FMLA…FAVC), 903 to 923 (LGTI…SLAI), 929 to 949 (LVCI…FWML), 1014 to 1034 (ASQS…GTLI), and 1044 to 1064 (FFLC…IFSF). Residues 779–1070 (IGIICSVITG…IFSFAPDMGK (292 aa)) enclose the ABC transmembrane type-1 2 domain. The ABC transporter 2 domain occupies 1105-1343 (IEFRDVHFRY…RGRYWELVNL (239 aa)). The N-linked (GlcNAc...) asparagine glycan is linked to Asn-1127. 1140-1147 (GASGCGKS) lines the ATP pocket.

It belongs to the ABC transporter superfamily. ABCB family. Multidrug resistance exporter (TC 3.A.1.201) subfamily.

It is found in the cell membrane. Its function is as follows. ABC-type transporter that is involved in the secretion of liamocins, glycolipids (also called heavy oils) composed of a single mannitol or arabitol headgroup linked to either three, four or even six 3,5-dihydroxydecanoic ester tail-groups. The polypeptide is ABC-type transporter MDR1 (Aureobasidium melanogenum (Aureobasidium pullulans var. melanogenum)).